Here is a 389-residue protein sequence, read N- to C-terminus: Phospho-N-acetylmuramoyl-pentapeptide-transferase (389 aa).

10 helical membrane-spanning segments follow: residues 25–45 (RAVM…PFVI), 74–94 (MGGV…ADWG), 97–117 (FIWI…VDDY), 134–154 (FFWQ…SVSE), 190–210 (ISYP…IVGS), 222–242 (GLVI…AYVM), 259–279 (AGEL…FLWF), 286–306 (VFMG…IAVI), 311–331 (IVLF…MLQV), and 366–386 (QVVV…LSTL).

It belongs to the glycosyltransferase 4 family. MraY subfamily. The cofactor is Mg(2+).

It localises to the cell inner membrane. The enzyme catalyses UDP-N-acetyl-alpha-D-muramoyl-L-alanyl-gamma-D-glutamyl-meso-2,6-diaminopimeloyl-D-alanyl-D-alanine + di-trans,octa-cis-undecaprenyl phosphate = di-trans,octa-cis-undecaprenyl diphospho-N-acetyl-alpha-D-muramoyl-L-alanyl-D-glutamyl-meso-2,6-diaminopimeloyl-D-alanyl-D-alanine + UMP. It functions in the pathway cell wall biogenesis; peptidoglycan biosynthesis. In terms of biological role, catalyzes the initial step of the lipid cycle reactions in the biosynthesis of the cell wall peptidoglycan: transfers peptidoglycan precursor phospho-MurNAc-pentapeptide from UDP-MurNAc-pentapeptide onto the lipid carrier undecaprenyl phosphate, yielding undecaprenyl-pyrophosphoryl-MurNAc-pentapeptide, known as lipid I. This chain is Phospho-N-acetylmuramoyl-pentapeptide-transferase, found in Ralstonia pickettii (strain 12J).